A 193-amino-acid polypeptide reads, in one-letter code: Segregation and condensation protein B (193 aa).

This sequence belongs to the ScpB family. In terms of assembly, homodimer. Homodimerization may be required to stabilize the binding of ScpA to the Smc head domains. Component of a cohesin-like complex composed of ScpA, ScpB and the Smc homodimer, in which ScpA and ScpB bind to the head domain of Smc. The presence of the three proteins is required for the association of the complex with DNA.

Its subcellular location is the cytoplasm. Functionally, participates in chromosomal partition during cell division. May act via the formation of a condensin-like complex containing Smc and ScpA that pull DNA away from mid-cell into both cell halves. The polypeptide is Segregation and condensation protein B (Streptococcus thermophilus (strain CNRZ 1066)).